Reading from the N-terminus, the 375-residue chain is Dual specificity protein phosphatase 4 (375 aa).

Positions 25-143 constitute a Rhodanese domain; that stretch reads SGGRCLLLDC…FASEYPEFCA (119 aa). One can recognise a Tyrosine-protein phosphatase domain in the interval 176–317; it reads GPVEILPFLY…LLQFESQVLA (142 aa). The active-site Phosphocysteine intermediate is the Cys-261.

Belongs to the protein-tyrosine phosphatase family. Non-receptor class dual specificity subfamily.

The protein resides in the nucleus. It catalyses the reaction O-phospho-L-tyrosyl-[protein] + H2O = L-tyrosyl-[protein] + phosphate. It carries out the reaction O-phospho-L-seryl-[protein] + H2O = L-seryl-[protein] + phosphate. The enzyme catalyses O-phospho-L-threonyl-[protein] + H2O = L-threonyl-[protein] + phosphate. Its function is as follows. Regulates mitogenic signal transduction by dephosphorylating both Thr and Tyr residues on MAP kinases ERK1 and ERK2. The chain is Dual specificity protein phosphatase 4 (DUSP4) from Gallus gallus (Chicken).